The sequence spans 314 residues: MNGVSRHLRASSLLSLIRSYGGINSVCRFSSQSDGFSGGRFREQVPVSGESANNSGLSNTGRIGSSPEPNPSTLRTFGDMKAGLLNRGVNGFSAPNAPPTFKSSLRSRLPNSLPDQFGQTNPGLPNTGGSGFSAPSLSSYENFTQSSSLLKENSRSGGKSSDLDFVREVIEDEGRRTAGIFSHFQRPNLETNADIIHIKMLRNNTFVTVTDSKGNVKCKATSGSLPDLKGGRKMTNYTADATAENIGRRAKAMGLKSVVVKVNGFTHFGKKKKAIIAFRDGFTNSRSDQNPIVYIEDTTRKAHNGCRLPRKRRV.

The transit peptide at 1 to 37 directs the protein to the mitochondrion; it reads MNGVSRHLRASSLLSLIRSYGGINSVCRFSSQSDGFS. Positions 34-138 are disordered; sequence DGFSGGRFRE…GSGFSAPSLS (105 aa). The span at 50–63 shows a compositional bias: polar residues; it reads ESANNSGLSNTGRI. Positions 103–114 are enriched in low complexity; that stretch reads SSLRSRLPNSLP.

It belongs to the universal ribosomal protein uS11 family. Component of the mitochondrial ribosome small subunit (28S) which comprises a 12S rRNA and about 30 distinct proteins.

Its subcellular location is the mitochondrion. Required for karyogamy during female gametophyte development, when the two polar nuclei fuse to form the diploid central cell nucleus. The chain is Small ribosomal subunit protein uS11m from Arabidopsis thaliana (Mouse-ear cress).